The primary structure comprises 107 residues: Phosphoribosyl-ATP pyrophosphatase (107 aa).

It belongs to the PRA-PH family.

Its subcellular location is the cytoplasm. It carries out the reaction 1-(5-phospho-beta-D-ribosyl)-ATP + H2O = 1-(5-phospho-beta-D-ribosyl)-5'-AMP + diphosphate + H(+). The protein operates within amino-acid biosynthesis; L-histidine biosynthesis; L-histidine from 5-phospho-alpha-D-ribose 1-diphosphate: step 2/9. The polypeptide is Phosphoribosyl-ATP pyrophosphatase (hisE) (Mesorhizobium japonicum (strain LMG 29417 / CECT 9101 / MAFF 303099) (Mesorhizobium loti (strain MAFF 303099))).